Consider the following 393-residue polypeptide: Formate-dependent phosphoribosylglycinamide formyltransferase (393 aa).

N(1)-(5-phospho-beta-D-ribosyl)glycinamide-binding positions include 22–23 (EL) and Glu-82. ATP contacts are provided by residues Arg-114, Lys-155, 160–165 (SSGHGQ), 195–198 (EGFI), and Glu-203. One can recognise an ATP-grasp domain in the interval 119–308 (RLAAEELGLK…QFALHARAIL (190 aa)). Residues Glu-267 and Glu-279 each coordinate Mg(2+). Residues Asp-286, Lys-356, and 363 to 364 (RR) contribute to the N(1)-(5-phospho-beta-D-ribosyl)glycinamide site.

It belongs to the PurK/PurT family. In terms of assembly, homodimer.

It carries out the reaction N(1)-(5-phospho-beta-D-ribosyl)glycinamide + formate + ATP = N(2)-formyl-N(1)-(5-phospho-beta-D-ribosyl)glycinamide + ADP + phosphate + H(+). It participates in purine metabolism; IMP biosynthesis via de novo pathway; N(2)-formyl-N(1)-(5-phospho-D-ribosyl)glycinamide from N(1)-(5-phospho-D-ribosyl)glycinamide (formate route): step 1/1. Functionally, involved in the de novo purine biosynthesis. Catalyzes the transfer of formate to 5-phospho-ribosyl-glycinamide (GAR), producing 5-phospho-ribosyl-N-formylglycinamide (FGAR). Formate is provided by PurU via hydrolysis of 10-formyl-tetrahydrofolate. In Actinobacillus pleuropneumoniae serotype 3 (strain JL03), this protein is Formate-dependent phosphoribosylglycinamide formyltransferase.